A 188-amino-acid polypeptide reads, in one-letter code: Protein SSX1 (188 aa).

2 disordered regions span residues 1-22 (MNGD…EKRS) and 111-188 (IMPK…EDDE). The KRAB-related domain occupies 20–83 (KRSKAFDDIA…KQATDFQGND (64 aa)). The span at 115 to 125 (KPAEDENDSKG) shows a compositional bias: basic and acidic residues. At serine 123 the chain carries Phosphoserine. Positions 153–170 (KRSGPKRGKHAWTHRLRE) are enriched in basic residues. Positions 179-188 (EISDPEEDDE) are enriched in acidic residues.

The protein belongs to the SSX family. As to expression, expressed at high level in the testis. Expressed at low level in thyroid. Not detected in tonsil, colon, lung, spleen, prostate, kidney, striated and smooth muscles. Detected in rhabdomyosarcoma and fibrosarcoma cell lines. Not detected in mesenchymal and epithelial cell lines. Expressed in testis.

The protein localises to the cytoplasm. It is found in the cytoskeleton. Its subcellular location is the flagellum axoneme. Functionally, could act as a modulator of transcription. Plays a role in spermatogenesis. The sequence is that of Protein SSX1 (SSX1) from Homo sapiens (Human).